The primary structure comprises 166 residues: Transcription factor HES-5 (166 aa).

In terms of domain architecture, bHLH spans 16-72 (KNRLRKPVVEKMRRDRINSSIEQLKLLLEQEFARHQPNSKLEKADILEMAVSYLKHS). Residues 88–119 (YSEGYSWCLQEAVQFLTLHAASDTQMKLLYHF) enclose the Orange domain. Residues 125–144 (APAAPAKEPKAPGAAPPPAL) are disordered. Residues 163 to 166 (WRPW) carry the WRPW motif motif.

In terms of assembly, transcription repression requires formation of a complex with a corepressor protein of the Groucho/TLE family. In terms of tissue distribution, expressed in fetal heart and brain tumors.

The protein localises to the nucleus. In terms of biological role, transcriptional repressor of genes that require a bHLH protein for their transcription. Plays an important role as neurogenesis negative regulator. This chain is Transcription factor HES-5 (HES5), found in Homo sapiens (Human).